Here is a 429-residue protein sequence, read N- to C-terminus: Bifunctional protein GlmU (429 aa).

The pyrophosphorylase stretch occupies residues 1 to 223 (MKTSILILAA…EDEFMGINDK (223 aa)). UDP-N-acetyl-alpha-D-glucosamine-binding positions include 8–11 (LAAG), lysine 22, and 81–82 (GT). Mg(2+) is bound at residue aspartate 102. The UDP-N-acetyl-alpha-D-glucosamine site is built by glycine 135, glutamate 149, asparagine 164, and asparagine 221. Mg(2+) is bound at residue asparagine 221. Positions 224–244 (FELSIAENFMQKKIKKYWMQQ) are linker. An N-acetyltransferase region spans residues 245–429 (GVIFHLPQST…KDYYYKKFQK (185 aa)). Arginine 308 and lysine 325 together coordinate UDP-N-acetyl-alpha-D-glucosamine. Histidine 336 functions as the Proton acceptor in the catalytic mechanism. Tyrosine 339 and asparagine 350 together coordinate UDP-N-acetyl-alpha-D-glucosamine. Acetyl-CoA contacts are provided by residues 359 to 360 (NY), serine 378, alanine 396, and arginine 413.

This sequence in the N-terminal section; belongs to the N-acetylglucosamine-1-phosphate uridyltransferase family. The protein in the C-terminal section; belongs to the transferase hexapeptide repeat family. In terms of assembly, homotrimer. Requires Mg(2+) as cofactor.

It is found in the cytoplasm. The enzyme catalyses alpha-D-glucosamine 1-phosphate + acetyl-CoA = N-acetyl-alpha-D-glucosamine 1-phosphate + CoA + H(+). The catalysed reaction is N-acetyl-alpha-D-glucosamine 1-phosphate + UTP + H(+) = UDP-N-acetyl-alpha-D-glucosamine + diphosphate. Its pathway is nucleotide-sugar biosynthesis; UDP-N-acetyl-alpha-D-glucosamine biosynthesis; N-acetyl-alpha-D-glucosamine 1-phosphate from alpha-D-glucosamine 6-phosphate (route II): step 2/2. It participates in nucleotide-sugar biosynthesis; UDP-N-acetyl-alpha-D-glucosamine biosynthesis; UDP-N-acetyl-alpha-D-glucosamine from N-acetyl-alpha-D-glucosamine 1-phosphate: step 1/1. The protein operates within bacterial outer membrane biogenesis; LPS lipid A biosynthesis. Catalyzes the last two sequential reactions in the de novo biosynthetic pathway for UDP-N-acetylglucosamine (UDP-GlcNAc). The C-terminal domain catalyzes the transfer of acetyl group from acetyl coenzyme A to glucosamine-1-phosphate (GlcN-1-P) to produce N-acetylglucosamine-1-phosphate (GlcNAc-1-P), which is converted into UDP-GlcNAc by the transfer of uridine 5-monophosphate (from uridine 5-triphosphate), a reaction catalyzed by the N-terminal domain. The polypeptide is Bifunctional protein GlmU (Campylobacter jejuni subsp. jejuni serotype O:2 (strain ATCC 700819 / NCTC 11168)).